The following is a 225-amino-acid chain: Membrane protein (225 aa).

Over 1–20 (MSNETNCTLDFEQSVELFKE) the chain is Virion surface. Residues 21–41 (YNLFITAFLLFLTIILQYGYA) form a helical membrane-spanning segment. Residues 42–51 (TRSKFIYILK) are Intravirion-facing. The helical transmembrane segment at 52 to 72 (MIVLWCFWPLNIAVGVISCIY) threads the bilayer. Over 73–77 (PPNTG) the chain is Virion surface. Residues 78 to 98 (GLVAAIILTVFACLSFVGYWI) form a helical membrane-spanning segment. Over 99 to 225 (QSIRLFKRCR…VATGGSSLYT (127 aa)) the chain is Intravirion.

Belongs to the gammacoronaviruses M protein family. As to quaternary structure, homomultimer. Interacts with envelope E protein in the budding compartment of the host cell, which is located between endoplasmic reticulum and the Golgi complex. Forms a complex with HE and S proteins. Interacts with nucleocapsid N protein. This interaction probably participates in RNA packaging into the virus.

The protein localises to the virion membrane. Its subcellular location is the host Golgi apparatus membrane. Its function is as follows. Component of the viral envelope that plays a central role in virus morphogenesis and assembly via its interactions with other viral proteins. The chain is Membrane protein from Gallus gallus (Chicken).